Reading from the N-terminus, the 242-residue chain is Biosynthetic peptidoglycan transglycosylase (242 aa).

The helical transmembrane segment at 21 to 41 (VALVVFWGGGIALFSVVPVPF) threads the bilayer.

This sequence belongs to the glycosyltransferase 51 family.

The protein localises to the cell inner membrane. The enzyme catalyses [GlcNAc-(1-&gt;4)-Mur2Ac(oyl-L-Ala-gamma-D-Glu-L-Lys-D-Ala-D-Ala)](n)-di-trans,octa-cis-undecaprenyl diphosphate + beta-D-GlcNAc-(1-&gt;4)-Mur2Ac(oyl-L-Ala-gamma-D-Glu-L-Lys-D-Ala-D-Ala)-di-trans,octa-cis-undecaprenyl diphosphate = [GlcNAc-(1-&gt;4)-Mur2Ac(oyl-L-Ala-gamma-D-Glu-L-Lys-D-Ala-D-Ala)](n+1)-di-trans,octa-cis-undecaprenyl diphosphate + di-trans,octa-cis-undecaprenyl diphosphate + H(+). Its pathway is cell wall biogenesis; peptidoglycan biosynthesis. In terms of biological role, peptidoglycan polymerase that catalyzes glycan chain elongation from lipid-linked precursors. The polypeptide is Biosynthetic peptidoglycan transglycosylase (Salmonella arizonae (strain ATCC BAA-731 / CDC346-86 / RSK2980)).